A 659-amino-acid chain; its full sequence is tRNA 5-methylaminomethyl-2-thiouridine biosynthesis bifunctional protein MnmC (659 aa).

The tract at residues 1–236 (MKPVMPHAQL…KWEILRGEFL (236 aa)) is tRNA (mnm(5)s(2)U34)-methyltransferase. The tract at residues 267 to 659 (IGAGLAGCAT…FALRRLIRGK (393 aa)) is FAD-dependent cmnm(5)s(2)U34 oxidoreductase.

In the N-terminal section; belongs to the methyltransferase superfamily. tRNA (mnm(5)s(2)U34)-methyltransferase family. The protein in the C-terminal section; belongs to the DAO family. FAD is required as a cofactor.

It is found in the cytoplasm. The catalysed reaction is 5-aminomethyl-2-thiouridine(34) in tRNA + S-adenosyl-L-methionine = 5-methylaminomethyl-2-thiouridine(34) in tRNA + S-adenosyl-L-homocysteine + H(+). Catalyzes the last two steps in the biosynthesis of 5-methylaminomethyl-2-thiouridine (mnm(5)s(2)U) at the wobble position (U34) in tRNA. Catalyzes the FAD-dependent demodification of cmnm(5)s(2)U34 to nm(5)s(2)U34, followed by the transfer of a methyl group from S-adenosyl-L-methionine to nm(5)s(2)U34, to form mnm(5)s(2)U34. This is tRNA 5-methylaminomethyl-2-thiouridine biosynthesis bifunctional protein MnmC from Pseudomonas fluorescens (strain Pf0-1).